Reading from the N-terminus, the 212-residue chain is Glycerol-3-phosphate acyltransferase (212 aa).

5 helical membrane-spanning segments follow: residues 3-23 (ILLA…VIVS), 51-71 (KAAI…VWLA), 78-98 (DVAV…PVFF), 115-135 (AVHP…AFFF), and 139-159 (SLAA…LFGT).

It belongs to the PlsY family. Probably interacts with PlsX.

It localises to the cell inner membrane. The enzyme catalyses an acyl phosphate + sn-glycerol 3-phosphate = a 1-acyl-sn-glycero-3-phosphate + phosphate. It functions in the pathway lipid metabolism; phospholipid metabolism. Catalyzes the transfer of an acyl group from acyl-phosphate (acyl-PO(4)) to glycerol-3-phosphate (G3P) to form lysophosphatidic acid (LPA). This enzyme utilizes acyl-phosphate as fatty acyl donor, but not acyl-CoA or acyl-ACP. The chain is Glycerol-3-phosphate acyltransferase from Burkholderia vietnamiensis (strain G4 / LMG 22486) (Burkholderia cepacia (strain R1808)).